Here is a 468-residue protein sequence, read N- to C-terminus: Peroxisome proliferator-activated receptor alpha (468 aa).

A disordered region spans residues 1 to 20 (MVDTESQICPLSPFGDDDLE). Positions 99 to 173 (NIECRICGDK…DGMSHNAIRF (75 aa)) form a DNA-binding region, nuclear receptor. NR C4-type zinc fingers lie at residues 102-122 (CRIC…CEGC) and 139-161 (CDRS…FQKC). In terms of domain architecture, NR LBD spans 239-466 (FVIHDMETLC…HPLLQEIYRD (228 aa)). The segment at 304-433 (DQVTLLKYGV…PKLLQKMADL (130 aa)) is required for heterodimerization with RXRA.

This sequence belongs to the nuclear hormone receptor family. NR1 subfamily. As to quaternary structure, heterodimer; with RXRA. This heterodimerization is required for DNA binding and transactivation activity. Interacts with NCOA3 coactivator. Interacts with CITED2; the interaction stimulates its transcriptional activity. Also interacts with PPARBP in vitro. Interacts with AKAP13, LPIN1, PRDM16 and coactivator NCOA6. Interacts with ASXL1 and ASXL2. Interacts with PER2. Interacts with SIRT1; the interaction seems to be modulated by NAD(+) levels. Interacts with CRY1 and CRY2. In hepatocytes, interacts with PAQR3 and HUWE1; the interactions promote PPARA poylubiquitination and HUWE1-mediated degradation. In terms of processing, ubiquitinated by E3 ubiquitin-protein ligase HUWE1; leading to proteasomal degradation. Phosphorylated.

The protein resides in the nucleus. Ligand-activated transcription factor. Key regulator of lipid metabolism. Activated by the endogenous ligand 1-palmitoyl-2-oleoyl-sn-glycerol-3-phosphocholine (16:0/18:1-GPC). Activated by oleylethanolamide, a naturally occurring lipid that regulates satiety. Receptor for peroxisome proliferators such as hypolipidemic drugs and fatty acids. Regulates the peroxisomal beta-oxidation pathway of fatty acids. Functions as a transcription activator for the ACOX1 and P450 genes. Transactivation activity requires heterodimerization with RXRA and is antagonized by NR2C2. May be required for the propagation of clock information to metabolic pathways regulated by PER2. In Phascolarctos cinereus (Koala), this protein is Peroxisome proliferator-activated receptor alpha (PPARA).